The primary structure comprises 300 residues: Recombination-promoting nuclease RpnC (300 aa).

It belongs to the Rpn/YhgA-like nuclease family.

Functionally, a low activity DNA endonuclease yielding 3'-hydroxyl ends. Upon expression enhances RecA-independent DNA recombination 2.9-fold, concomitantly reducing viability by 59% and inducing DNA damage as measured by induction of the SOS repair response. The protein is Recombination-promoting nuclease RpnC of Escherichia coli (strain K12).